The sequence spans 163 residues: Phosphopantetheine adenylyltransferase (163 aa).

Position 10 (threonine 10) interacts with substrate. ATP-binding positions include 10-11 (TF) and histidine 18. 3 residues coordinate substrate: lysine 42, leucine 74, and arginine 88. ATP-binding positions include 89–91 (GLR), glutamate 99, and 124–130 (NSFISST).

It belongs to the bacterial CoaD family. In terms of assembly, homohexamer. It depends on Mg(2+) as a cofactor.

Its subcellular location is the cytoplasm. The enzyme catalyses (R)-4'-phosphopantetheine + ATP + H(+) = 3'-dephospho-CoA + diphosphate. It participates in cofactor biosynthesis; coenzyme A biosynthesis; CoA from (R)-pantothenate: step 4/5. Functionally, reversibly transfers an adenylyl group from ATP to 4'-phosphopantetheine, yielding dephospho-CoA (dPCoA) and pyrophosphate. This Shewanella sp. (strain W3-18-1) protein is Phosphopantetheine adenylyltransferase.